The chain runs to 213 residues: ATP-dependent Clp protease proteolytic subunit 3 (213 aa).

Catalysis depends on Ser-107, which acts as the Nucleophile. His-132 is a catalytic residue.

Belongs to the peptidase S14 family. In terms of assembly, fourteen ClpP subunits assemble into 2 heptameric rings which stack back to back to give a disk-like structure with a central cavity, resembling the structure of eukaryotic proteasomes.

The protein localises to the cytoplasm. The enzyme catalyses Hydrolysis of proteins to small peptides in the presence of ATP and magnesium. alpha-casein is the usual test substrate. In the absence of ATP, only oligopeptides shorter than five residues are hydrolyzed (such as succinyl-Leu-Tyr-|-NHMec, and Leu-Tyr-Leu-|-Tyr-Trp, in which cleavage of the -Tyr-|-Leu- and -Tyr-|-Trp bonds also occurs).. Functionally, cleaves peptides in various proteins in a process that requires ATP hydrolysis. Has a chymotrypsin-like activity. Plays a major role in the degradation of misfolded proteins. The protein is ATP-dependent Clp protease proteolytic subunit 3 of Frankia casuarinae (strain DSM 45818 / CECT 9043 / HFP020203 / CcI3).